The following is a 201-amino-acid chain: Adenylyl-sulfate kinase (201 aa).

The tract at residues 1–23 (MALHDENVVWHSHPVTPQQREQH) is disordered. 35–42 (GLSGSGKS) is a binding site for ATP. Serine 109 functions as the Phosphoserine intermediate in the catalytic mechanism.

This sequence belongs to the APS kinase family.

The catalysed reaction is adenosine 5'-phosphosulfate + ATP = 3'-phosphoadenylyl sulfate + ADP + H(+). It participates in sulfur metabolism; hydrogen sulfide biosynthesis; sulfite from sulfate: step 2/3. Functionally, catalyzes the synthesis of activated sulfate. The polypeptide is Adenylyl-sulfate kinase (Escherichia coli O6:K15:H31 (strain 536 / UPEC)).